The following is a 316-amino-acid chain: Myb-related protein 306 (316 aa).

HTH myb-type domains are found at residues 9–65 (KIGV…RPGI) and 66–116 (KRGD…KKKL). 2 consecutive DNA-binding regions (H-T-H motif) follow at residues 37–61 (WRAIPSNTGLLRCSKSCRLRWTNYL) and 89–112 (WAAIASYLPHRTDNDIKNYWNTHL). Disordered stretches follow at residues 119–144 (LQSPENGKCQDGNSSVDSDKSVSKGQ), 168–193 (KTSSSTDDPKLSTVQTTQPRPFQAST), and 209–230 (KKSPVNASSTSQAGSSESTTTS). The span at 135–144 (DSDKSVSKGQ) shows a compositional bias: basic and acidic residues. A compositionally biased stretch (polar residues) spans 181–193 (VQTTQPRPFQAST). Residues 216–230 (SSTSQAGSSESTTTS) are compositionally biased toward low complexity.

Expressed in flowers, leaves and weakly in seed pods.

The protein resides in the nucleus. Transcription factor. This is Myb-related protein 306 from Antirrhinum majus (Garden snapdragon).